Reading from the N-terminus, the 206-residue chain is Protein GrpE (206 aa).

The protein belongs to the GrpE family. As to quaternary structure, homodimer.

It localises to the cytoplasm. Participates actively in the response to hyperosmotic and heat shock by preventing the aggregation of stress-denatured proteins, in association with DnaK and GrpE. It is the nucleotide exchange factor for DnaK and may function as a thermosensor. Unfolded proteins bind initially to DnaJ; upon interaction with the DnaJ-bound protein, DnaK hydrolyzes its bound ATP, resulting in the formation of a stable complex. GrpE releases ADP from DnaK; ATP binding to DnaK triggers the release of the substrate protein, thus completing the reaction cycle. Several rounds of ATP-dependent interactions between DnaJ, DnaK and GrpE are required for fully efficient folding. This chain is Protein GrpE, found in Shewanella baltica (strain OS223).